Here is a 234-residue protein sequence, read N- to C-terminus: Sugar fermentation stimulation protein homolog (234 aa).

It belongs to the SfsA family.

The sequence is that of Sugar fermentation stimulation protein homolog from Shewanella sp. (strain ANA-3).